The chain runs to 750 residues: Polyribonucleotide nucleotidyltransferase (750 aa).

Mg(2+) contacts are provided by Asp-489 and Asp-495. In terms of domain architecture, KH spans Pro-556–Ile-620. The S1 motif domain occupies Gly-630–Lys-701. The tract at residues Lys-697–Asp-750 is disordered. A compositionally biased stretch (basic and acidic residues) spans Ala-702–Asp-750.

The protein belongs to the polyribonucleotide nucleotidyltransferase family. Requires Mg(2+) as cofactor.

It is found in the cytoplasm. It carries out the reaction RNA(n+1) + phosphate = RNA(n) + a ribonucleoside 5'-diphosphate. Its function is as follows. Involved in mRNA degradation. Catalyzes the phosphorolysis of single-stranded polyribonucleotides processively in the 3'- to 5'-direction. The chain is Polyribonucleotide nucleotidyltransferase from Christiangramia forsetii (strain DSM 17595 / CGMCC 1.15422 / KT0803) (Gramella forsetii).